Consider the following 104-residue polypeptide: MAGKMKIRRNDSVEIIAGKERGKRGEVVKVLQEDNKVIVGGLNMIKKAMRKRSQQDQGGIVEIEAPISASNVMVICKKCGKTRIAYEIKDGKKTRICRKCGEAL.

It belongs to the universal ribosomal protein uL24 family. In terms of assembly, part of the 50S ribosomal subunit.

Its function is as follows. One of two assembly initiator proteins, it binds directly to the 5'-end of the 23S rRNA, where it nucleates assembly of the 50S subunit. Functionally, one of the proteins that surrounds the polypeptide exit tunnel on the outside of the subunit. The protein is Large ribosomal subunit protein uL24 of Treponema denticola (strain ATCC 35405 / DSM 14222 / CIP 103919 / JCM 8153 / KCTC 15104).